The following is a 587-amino-acid chain: Laccase abr2 (587 aa).

An N-terminal signal peptide occupies residues 1–17; sequence MWYQSASLLGVAAVAQA. Plastocyanin-like domains lie at 41–137 and 168–350; these read IFVN…VHIR and LVML…ANDG. Asparagine 71 carries N-linked (GlcNAc...) asparagine glycosylation. Residues histidine 75, histidine 77, histidine 119, and histidine 121 each contribute to the Cu cation site. N-linked (GlcNAc...) asparagine glycans are attached at residues asparagine 228, asparagine 383, asparagine 420, and asparagine 462. The 181-residue stretch at 397–577 folds into the Plastocyanin-like 3 domain; that stretch reads PPYPAISPAS…ILMDGVDVWP (181 aa). Histidine 487 serves as a coordination point for Cu cation. N-linked (GlcNAc...) asparagine glycosylation is present at asparagine 504.

Belongs to the multicopper oxidase family.

It localises to the cell surface. Its pathway is pigment biosynthesis; melanin biosynthesis. In terms of biological role, laccase; part of the gene cluster that mediates the biosynthesis of dihydroxynaphthalene (DHN)-melanin, a bluish-green pigment and a structural component of the conidial wall. The first step of the pathway is the production of the heptaketide naphtopyrone YWA1 by the polyketide synthase alb1 though condensation of acetyl-CoA with malonyl-CoA. The naphtopyrone YWA1 is then converted to the pentaketide 1,3,6,8-tetrahydroxynaphthalene (1,3,6,8-THN) by the heptaketide hydrolyase ayg1 though chain-length shortening. 1,3,6,8-THN is substrate of the hydroxynaphthalene reductase arp2 to yield scytalone. The scytalone dehydratase arp1 then reduces scytalone to 1,3,8-THN. 1,3,8-THN is also substrate of the hydroxynaphthalene reductase arp2 to yield vermelone. Vermelone is further converted by the multicopper oxidase abr1 to 1,8-DHN. Finally the laccase abr2 transforms 1,8-DHN to DHN-melanin. DHN-melanin biosynthesis appears to be initiated in endosomes where early enzymes (abl1, ayg1, arp1 and arp2) localize, with exocytosis leading to melanin deposition on the cell surface where late enzymes (abr1 and abr2) localize. DHN-melanin is an important structural component of the outer cell wall and is required for the presence of conidial surface hydrophobins. DHN-melanin also plays a crucial role in fungal virulence, including a protective role against the host's immune defenses. DHN-melanin also protects conidia against amoeba predation. The chain is Laccase abr2 from Aspergillus fumigatus (strain ATCC MYA-4609 / CBS 101355 / FGSC A1100 / Af293) (Neosartorya fumigata).